Here is a 630-residue protein sequence, read N- to C-terminus: tRNA uridine 5-carboxymethylaminomethyl modification enzyme MnmG (630 aa).

13–18 (GGGHAG) contributes to the FAD binding site. 273-287 (GPRYCPSIEDKVMRF) lines the NAD(+) pocket.

The protein belongs to the MnmG family. Homodimer. Heterotetramer of two MnmE and two MnmG subunits. FAD is required as a cofactor.

Its subcellular location is the cytoplasm. In terms of biological role, NAD-binding protein involved in the addition of a carboxymethylaminomethyl (cmnm) group at the wobble position (U34) of certain tRNAs, forming tRNA-cmnm(5)s(2)U34. This Actinobacillus pleuropneumoniae serotype 5b (strain L20) protein is tRNA uridine 5-carboxymethylaminomethyl modification enzyme MnmG.